Consider the following 606-residue polypeptide: Neutral/alkaline invertase 3, chloroplastic (606 aa).

Residues methionine 1–arginine 58 constitute a chloroplast transit peptide. The tract at residues arginine 97 to valine 126 is disordered.

It belongs to the glycosyl hydrolase 100 family.

It is found in the plastid. The protein resides in the chloroplast. It catalyses the reaction Hydrolysis of terminal non-reducing beta-D-fructofuranoside residues in beta-D-fructofuranosides.. Functionally, mitochondrial invertase that cleaves sucrose into glucose and fructose. The polypeptide is Neutral/alkaline invertase 3, chloroplastic (Oryza sativa subsp. japonica (Rice)).